A 542-amino-acid chain; its full sequence is Chaperonin GroEL (542 aa).

ATP is bound by residues 29–32 (TLGP), Lys50, 86–90 (DGTTT), Gly414, and Asp494.

Belongs to the chaperonin (HSP60) family. Forms a cylinder of 14 subunits composed of two heptameric rings stacked back-to-back. Interacts with the co-chaperonin GroES.

It is found in the cytoplasm. It catalyses the reaction ATP + H2O + a folded polypeptide = ADP + phosphate + an unfolded polypeptide.. Its function is as follows. Together with its co-chaperonin GroES, plays an essential role in assisting protein folding. The GroEL-GroES system forms a nano-cage that allows encapsulation of the non-native substrate proteins and provides a physical environment optimized to promote and accelerate protein folding. This Cytophaga hutchinsonii (strain ATCC 33406 / DSM 1761 / CIP 103989 / NBRC 15051 / NCIMB 9469 / D465) protein is Chaperonin GroEL.